The chain runs to 148 residues: Small ribosomal subunit protein uS7m (148 aa).

It belongs to the universal ribosomal protein uS7 family. As to quaternary structure, part of the small ribosomal subunit.

It localises to the mitochondrion. In terms of biological role, one of the primary rRNA binding proteins, it binds directly to 18S rRNA where it nucleates assembly of the head domain of the small subunit. This Triticum aestivum (Wheat) protein is Small ribosomal subunit protein uS7m (RPS7).